The following is a 42-amino-acid chain: DRDSCVDKSRCAKYGYFQECTDCCKKYGHNGGTCMFFKCKCA.

Intrachain disulfides connect Cys5–Cys23, Cys11–Cys34, Cys20–Cys39, and Cys24–Cys41.

Expressed by the venom gland.

The protein resides in the secreted. Functionally, blocks human Kv11.1/KCNH2/ERG1 potassium channels (reversible, IC(50)=3.4 nM). At high toxin concentrations, block of Kv11.1/KCNH2/ERG1 macroscopic current is almost complete. Does not accelerate the kinetics of the closing process and has no effect on the activation and inactivation kinetics of the Kv11.1/KCNH2/ERG1 channels. This chain is Potassium channel toxin gamma-KTx 1.10, found in Centruroides margaritatus (Central American bark Scorpion).